The following is a 535-amino-acid chain: Probable serine/threonine protein phosphatase 2A regulatory subunit B''delta (535 aa).

The interval 67–104 (SGTNSGSNSPLASMFPARNGPPLSPRNSTGSPRIARQR) is disordered. 2 consecutive EF-hand domains span residues 174–209 (VPSFFSTSIFKKVDTNNTGFVKREDFIDYWVKGNML) and 387–422 (SSEPSLEYWFKCIDLDANGVLTRNELQFFYEEQLHR). Ca(2+) is bound by residues Asp-400, Asp-402, Asn-404, and Glu-411.

PP2A consists of a common heterodimeric core enzyme, composed of a 36 kDa catalytic subunit (subunit C) and a 65 kDa constant regulatory subunit (PR65 or subunit A), that associates with a variety of regulatory subunits. Proteins that associate with the core dimer include three families of regulatory subunits B (the R2/B/PR55/B55, R3/B''/PR72/PR130/PR59 and R5/B'/B56 families) and cell signaling molecules.

In terms of biological role, probable regulatory subunit of type 2A protein phosphatase. The chain is Probable serine/threonine protein phosphatase 2A regulatory subunit B''delta (B''DELTA) from Arabidopsis thaliana (Mouse-ear cress).